The chain runs to 407 residues: Elongation factor Tu (407 aa).

One can recognise a tr-type G domain in the interval 10–217; the sequence is KPHVNVGTIG…ALDSYIPEPE (208 aa). The segment at 19-26 is G1; the sequence is GHVDHGKT. 19–26 is a GTP binding site; it reads GHVDHGKT. Thr26 serves as a coordination point for Mg(2+). A G2 region spans residues 60 to 64; that stretch reads GITIA. A G3 region spans residues 81-84; sequence DCPG. GTP contacts are provided by residues 81-85 and 136-139; these read DCPGH and NKAD. The segment at 136–139 is G4; sequence NKAD. The segment at 184-186 is G5; that stretch reads SAL.

It belongs to the TRAFAC class translation factor GTPase superfamily. Classic translation factor GTPase family. EF-Tu/EF-1A subfamily. Monomer.

It localises to the cytoplasm. It catalyses the reaction GTP + H2O = GDP + phosphate + H(+). Functionally, GTP hydrolase that promotes the GTP-dependent binding of aminoacyl-tRNA to the A-site of ribosomes during protein biosynthesis. This is Elongation factor Tu from Saccharophagus degradans (strain 2-40 / ATCC 43961 / DSM 17024).